Here is a 205-residue protein sequence, read N- to C-terminus: Small ribosomal subunit protein uS4 (205 aa).

Residues 18–49 (NIWGRPKSPVNKREYGPGQHGQRRKGKLSDFG) are disordered. The S4 RNA-binding domain maps to 94–157 (RRLDTVVYRA…KQLALVLEAN (64 aa)).

This sequence belongs to the universal ribosomal protein uS4 family. As to quaternary structure, part of the 30S ribosomal subunit. Contacts protein S5. The interaction surface between S4 and S5 is involved in control of translational fidelity.

Its function is as follows. One of the primary rRNA binding proteins, it binds directly to 16S rRNA where it nucleates assembly of the body of the 30S subunit. Functionally, with S5 and S12 plays an important role in translational accuracy. In Nitrobacter winogradskyi (strain ATCC 25391 / DSM 10237 / CIP 104748 / NCIMB 11846 / Nb-255), this protein is Small ribosomal subunit protein uS4.